We begin with the raw amino-acid sequence, 308 residues long: Protein translocase subunit SecF (308 aa).

6 helical membrane passes run 28–48 (SIIL…NFGI), 140–160 (IEAG…YIWV), 164–184 (WYFG…ALGF), 194–214 (LSTI…SVVI), 246–266 (ILTV…GGEA), and 272–292 (VLVF…SAPI).

It belongs to the SecD/SecF family. SecF subfamily. As to quaternary structure, forms a complex with SecD. Part of the essential Sec protein translocation apparatus which comprises SecA, SecYEG and auxiliary proteins SecDF-YajC and YidC.

The protein resides in the cell inner membrane. Part of the Sec protein translocase complex. Interacts with the SecYEG preprotein conducting channel. SecDF uses the proton motive force (PMF) to complete protein translocation after the ATP-dependent function of SecA. In Rickettsia felis (strain ATCC VR-1525 / URRWXCal2) (Rickettsia azadi), this protein is Protein translocase subunit SecF.